The chain runs to 449 residues: Phosphoglucosamine mutase (449 aa).

Catalysis depends on Ser100, which acts as the Phosphoserine intermediate. Residues Ser100, Asp241, Asp243, and Asp245 each contribute to the Mg(2+) site. Residue Ser100 is modified to Phosphoserine.

It belongs to the phosphohexose mutase family. Mg(2+) serves as cofactor. Activated by phosphorylation.

The enzyme catalyses alpha-D-glucosamine 1-phosphate = D-glucosamine 6-phosphate. In terms of biological role, catalyzes the conversion of glucosamine-6-phosphate to glucosamine-1-phosphate. The polypeptide is Phosphoglucosamine mutase (Clostridium kluyveri (strain NBRC 12016)).